A 120-amino-acid polypeptide reads, in one-letter code: 5-hydroxyisourate hydrolase 2 (120 aa).

Histidine 10, arginine 48, and tyrosine 117 together coordinate substrate.

Belongs to the transthyretin family. 5-hydroxyisourate hydrolase subfamily. As to quaternary structure, homotetramer.

It carries out the reaction 5-hydroxyisourate + H2O = 5-hydroxy-2-oxo-4-ureido-2,5-dihydro-1H-imidazole-5-carboxylate + H(+). Its function is as follows. Catalyzes the hydrolysis of 5-hydroxyisourate (HIU) to 2-oxo-4-hydroxy-4-carboxy-5-ureidoimidazoline (OHCU). This Rhizobium meliloti (strain 1021) (Ensifer meliloti) protein is 5-hydroxyisourate hydrolase 2.